Here is a 346-residue protein sequence, read N- to C-terminus: N-acetyl-gamma-glutamyl-phosphate reductase (346 aa).

Cysteine 149 is a catalytic residue.

Belongs to the NAGSA dehydrogenase family. Type 1 subfamily.

Its subcellular location is the cytoplasm. The enzyme catalyses N-acetyl-L-glutamate 5-semialdehyde + phosphate + NADP(+) = N-acetyl-L-glutamyl 5-phosphate + NADPH + H(+). Its pathway is amino-acid biosynthesis; L-arginine biosynthesis; N(2)-acetyl-L-ornithine from L-glutamate: step 3/4. Functionally, catalyzes the NADPH-dependent reduction of N-acetyl-5-glutamyl phosphate to yield N-acetyl-L-glutamate 5-semialdehyde. This Citrifermentans bemidjiense (strain ATCC BAA-1014 / DSM 16622 / JCM 12645 / Bem) (Geobacter bemidjiensis) protein is N-acetyl-gamma-glutamyl-phosphate reductase.